The primary structure comprises 527 residues: DNA polymerase epsilon subunit 2 (527 aa).

Belongs to the DNA polymerase epsilon subunit B family. In terms of assembly, component of the DNA polymerase epsilon complex consisting of four subunits: the catalytic subunit POLE and the accessory subunits POLE2, POLE3 and POLE4.

Its subcellular location is the nucleus. Its function is as follows. Accessory component of the DNA polymerase epsilon complex. Participates in DNA repair and in chromosomal DNA replication. The chain is DNA polymerase epsilon subunit 2 from Homo sapiens (Human).